The primary structure comprises 465 residues: Kynureninase (465 aa).

Pyridoxal 5'-phosphate is bound by residues leucine 116, threonine 117, 144–147 (FPSD), aspartate 231, histidine 234, and tyrosine 256. Residue lysine 257 is modified to N6-(pyridoxal phosphate)lysine. Pyridoxal 5'-phosphate-binding residues include tryptophan 291 and asparagine 319.

The protein belongs to the kynureninase family. In terms of assembly, homodimer. The cofactor is pyridoxal 5'-phosphate.

It localises to the cytoplasm. The catalysed reaction is L-kynurenine + H2O = anthranilate + L-alanine + H(+). It carries out the reaction 3-hydroxy-L-kynurenine + H2O = 3-hydroxyanthranilate + L-alanine + H(+). It participates in amino-acid degradation; L-kynurenine degradation; L-alanine and anthranilate from L-kynurenine: step 1/1. It functions in the pathway cofactor biosynthesis; NAD(+) biosynthesis; quinolinate from L-kynurenine: step 2/3. In terms of biological role, catalyzes the cleavage of L-kynurenine (L-Kyn) and L-3-hydroxykynurenine (L-3OHKyn) into anthranilic acid (AA) and 3-hydroxyanthranilic acid (3-OHAA), respectively. The protein is Kynureninase of Scheffersomyces stipitis (strain ATCC 58785 / CBS 6054 / NBRC 10063 / NRRL Y-11545) (Yeast).